The primary structure comprises 445 residues: Homoserine O-succinyltransferase (445 aa).

One can recognise an AB hydrolase-1 domain in the interval 45–411 (NAVLICHALS…APHGHDSFLF (367 aa)). Ser153 (nucleophile) is an active-site residue. Arg223 is a binding site for substrate. Residues Asp373 and His406 contribute to the active site. Asp407 serves as a coordination point for substrate.

Belongs to the AB hydrolase superfamily. MetX family. Homodimer.

The protein localises to the cytoplasm. It carries out the reaction L-homoserine + succinyl-CoA = O-succinyl-L-homoserine + CoA. It participates in amino-acid biosynthesis; L-methionine biosynthesis via de novo pathway; O-succinyl-L-homoserine from L-homoserine: step 1/1. In terms of biological role, transfers a succinyl group from succinyl-CoA to L-homoserine, forming succinyl-L-homoserine. The chain is Homoserine O-succinyltransferase from Psychrobacter arcticus (strain DSM 17307 / VKM B-2377 / 273-4).